The sequence spans 424 residues: Glutamate-1-semialdehyde 2,1-aminomutase (424 aa).

K264 bears the N6-(pyridoxal phosphate)lysine mark.

It belongs to the class-III pyridoxal-phosphate-dependent aminotransferase family. HemL subfamily. In terms of assembly, homodimer. It depends on pyridoxal 5'-phosphate as a cofactor.

The protein localises to the cytoplasm. The enzyme catalyses (S)-4-amino-5-oxopentanoate = 5-aminolevulinate. It functions in the pathway porphyrin-containing compound metabolism; protoporphyrin-IX biosynthesis; 5-aminolevulinate from L-glutamyl-tRNA(Glu): step 2/2. This chain is Glutamate-1-semialdehyde 2,1-aminomutase (hemL), found in Aquifex aeolicus (strain VF5).